The primary structure comprises 156 residues: Small ribosomal subunit protein uS7 (156 aa).

It belongs to the universal ribosomal protein uS7 family. Part of the 30S ribosomal subunit. Contacts proteins S9 and S11.

In terms of biological role, one of the primary rRNA binding proteins, it binds directly to 16S rRNA where it nucleates assembly of the head domain of the 30S subunit. Is located at the subunit interface close to the decoding center, probably blocks exit of the E-site tRNA. This is Small ribosomal subunit protein uS7 from Acinetobacter baylyi (strain ATCC 33305 / BD413 / ADP1).